We begin with the raw amino-acid sequence, 365 residues long: tRNA(Met) cytidine acetate ligase (365 aa).

Residues 7-20 (IAEF…HKYL), Gly-96, Asn-152, and Arg-175 each bind ATP.

Belongs to the TmcAL family.

The protein resides in the cytoplasm. The catalysed reaction is cytidine(34) in elongator tRNA(Met) + acetate + ATP = N(4)-acetylcytidine(34) in elongator tRNA(Met) + AMP + diphosphate. Catalyzes the formation of N(4)-acetylcytidine (ac(4)C) at the wobble position of elongator tRNA(Met), using acetate and ATP as substrates. First activates an acetate ion to form acetyladenylate (Ac-AMP) and then transfers the acetyl group to tRNA to form ac(4)C34. In Streptococcus pneumoniae (strain Hungary19A-6), this protein is tRNA(Met) cytidine acetate ligase.